A 317-amino-acid chain; its full sequence is Melanocyte-stimulating hormone receptor (317 aa).

The Extracellular portion of the chain corresponds to 1 to 37; the sequence is MPVQGSQRRLLGSLNSTPTATPHLGLAANQTGARCLE. A glycan (N-linked (GlcNAc...) asparagine) is linked at asparagine 29. A helical transmembrane segment spans residues 38-63; it reads MSIPDGLFLSLGLVSLVENVLVVTAI. Topologically, residues 64–72 are cytoplasmic; the sequence is AKNRNLHSP. The helical transmembrane segment at 73–93 threads the bilayer; that stretch reads MYCFICCLALSDLLVSGSNML. Topologically, residues 94-118 are extracellular; the sequence is ETAVTLLLEAGALAARAAVVQQLDN. The helical transmembrane segment at 119–140 threads the bilayer; sequence VIDVITCSSMLSSLCFLGAIAV. The Cytoplasmic segment spans residues 141–163; that stretch reads DRYISIFYALRYHSIVTLPRARR. A helical membrane pass occupies residues 164-183; sequence AIAAIWVASVLCSTLFIAYY. Topologically, residues 184 to 191 are extracellular; it reads DHAAVLLC. Residues 192 to 211 traverse the membrane as a helical segment; that stretch reads LVVFFLAMLVLMAVLYVHML. The Cytoplasmic segment spans residues 212–240; it reads ARACQHAQGIARLHKRQRLAHQGFGLKGA. The chain crosses the membrane as a helical span at residues 241 to 266; sequence ATLTILLGIFFLCWGPFFLHLTLIVL. Over 267–279 the chain is Extracellular; it reads CPQHPTCSCIFKN. The helical transmembrane segment at 280–300 threads the bilayer; the sequence is FNLFLTLIICNAIIDPLIYAF. Over 301–317 the chain is Cytoplasmic; the sequence is RSQELRRTLKEVLLCSW. Residue cysteine 315 is the site of S-palmitoyl cysteine attachment.

It belongs to the G-protein coupled receptor 1 family. Interacts with MGRN1, but does not undergo MGRN1-mediated ubiquitination; this interaction competes with GNAS-binding and thus inhibits agonist-induced cAMP production. Interacts with OPN3; the interaction results in a decrease in MC1R-mediated cAMP signaling and ultimately a decrease in melanin production in melanocytes.

Its subcellular location is the cell membrane. In terms of biological role, receptor for MSH (alpha, beta and gamma) and ACTH. The activity of this receptor is mediated by G proteins which activate adenylate cyclase. Mediates melanogenesis, the production of eumelanin (black/brown) and phaeomelanin (red/yellow), via regulation of cAMP signaling in melanocytes. This Macaca nemestrina (Pig-tailed macaque) protein is Melanocyte-stimulating hormone receptor (MC1R).